We begin with the raw amino-acid sequence, 273 residues long: Putative phosphoenolpyruvate synthase regulatory protein (273 aa).

153-160 (GVSRSGKT) contributes to the ADP binding site.

This sequence belongs to the pyruvate, phosphate/water dikinase regulatory protein family. PSRP subfamily.

It carries out the reaction [pyruvate, water dikinase] + ADP = [pyruvate, water dikinase]-phosphate + AMP + H(+). The enzyme catalyses [pyruvate, water dikinase]-phosphate + phosphate + H(+) = [pyruvate, water dikinase] + diphosphate. Functionally, bifunctional serine/threonine kinase and phosphorylase involved in the regulation of the phosphoenolpyruvate synthase (PEPS) by catalyzing its phosphorylation/dephosphorylation. This is Putative phosphoenolpyruvate synthase regulatory protein from Verminephrobacter eiseniae (strain EF01-2).